The sequence spans 101 residues: Integration host factor subunit alpha (101 aa).

Belongs to the bacterial histone-like protein family. In terms of assembly, heterodimer of an alpha and a beta chain.

This protein is one of the two subunits of integration host factor, a specific DNA-binding protein that functions in genetic recombination as well as in transcriptional and translational control. The protein is Integration host factor subunit alpha of Alkalilimnicola ehrlichii (strain ATCC BAA-1101 / DSM 17681 / MLHE-1).